The following is a 326-amino-acid chain: Glyoxylate/hydroxypyruvate reductase B (326 aa).

Residues Arg-237 and Glu-266 contribute to the active site. His-285 (proton donor) is an active-site residue.

Belongs to the D-isomer specific 2-hydroxyacid dehydrogenase family. GhrB subfamily. Homodimer.

The protein localises to the cytoplasm. It carries out the reaction glycolate + NADP(+) = glyoxylate + NADPH + H(+). It catalyses the reaction (R)-glycerate + NAD(+) = 3-hydroxypyruvate + NADH + H(+). The enzyme catalyses (R)-glycerate + NADP(+) = 3-hydroxypyruvate + NADPH + H(+). Its function is as follows. Catalyzes the NADPH-dependent reduction of glyoxylate and hydroxypyruvate into glycolate and glycerate, respectively. This chain is Glyoxylate/hydroxypyruvate reductase B, found in Yersinia pseudotuberculosis serotype O:3 (strain YPIII).